A 763-amino-acid polypeptide reads, in one-letter code: Nibrin (763 aa).

The region spanning 22 to 81 is the FHA domain; that stretch reads YVVGRKNCAILIPEDQSISRCHATLSVSHPSANLGQTNAASVLSIKDSSKYGTTVNGDKM. 2 consecutive BRCT domains span residues 102–179 and 215–324; these read SKYR…CELL and KRKS…NPRR. 3 disordered regions span residues 389-496, 535-593, and 738-763; these read VKET…SSQT, SKAA…SEIE, and QTQQ…KRRR. The segment covering 423–433 has biased composition (basic and acidic residues); that stretch reads LFREDETDTRK. The segment covering 434-443 has biased composition (polar residues); it reads NTPSLLPTKS. The short motif at 469–474 is the Nuclear localization signal element; the sequence is AKKRDR. Basic and acidic residues predominate over residues 473–482; sequence DRAEDEKEAS. Residues 742-752 show a composition bias toward basic and acidic residues; it reads VREESLAEDLF. Positions 748-757 match the FxF/Y motif motif; it reads AEDLFRYNPK.

This sequence belongs to the Nibrin family. Component of the MRN complex composed of two heterodimers rad50 and mre11 associated with a single nbn.

The protein resides in the nucleus. It localises to the chromosome. Its subcellular location is the PML body. The protein localises to the telomere. Functionally, component of the MRN complex, which plays a central role in double-strand break (DSB) repair, DNA recombination, maintenance of telomere integrity and meiosis. The MRN complex is involved in the repair of DNA double-strand breaks (DSBs) via homologous recombination (HR), an error-free mechanism which primarily occurs during S and G2 phases. The complex (1) mediates the end resection of damaged DNA, which generates proper single-stranded DNA, a key initial steps in HR, and is (2) required for the recruitment of other repair factors and efficient activation of ATM and ATR upon DNA damage. The MRN complex possesses single-strand endonuclease activity and double-strand-specific 3'-5' exonuclease activity, which are provided by MRE11, to initiate end resection, which is required for single-strand invasion and recombination. Within the MRN complex, nbn acts as a protein-protein adapter, which specifically recognizes and binds phosphorylated proteins, promoting their recruitment to DNA damage sites. Recruits mre11 and rad50 components of the MRN complex to DSBs in response to DNA damage. Promotes the recruitment of PI3/PI4-kinase family members atm, atr, and probably DNA-PKcs to the DNA damage sites, activating their functions. Mediates the recruitment of phosphorylated rbbp8/CtIP to DSBs, leading to cooperation between the MRN complex and rbbp8/CtIP to initiate end resection. The MRN complex promotes recruitment of topbp1 to DNA damage sites. The MRN complex and rbbp8/CtIP are also required for chromosome alignment during metaphase. This Xenopus laevis (African clawed frog) protein is Nibrin.